Here is a 234-residue protein sequence, read N- to C-terminus: MSSQPNHQTSISSLLHDRLHIPPAETIVEKESAEKDTCQSQRKRKEPVLHEVDGSSSGAAKKQDHNAKERLRRMRLHASYLTLGTLLPDHSSSSSKKKWSAPSIIDNVITYIPKLQNEVGELTLRKQKLVELERRGPSIRAISVLELGESGYEAVVQICLKKENEDEFSNLLHVMEVQGLSVLSASTSQVCREQRVVCYNFHVKMDEKPCEGDDYITVLKNNIISSLRDNTKCK.

Positions 1-13 (MSSQPNHQTSISS) are enriched in polar residues. The interval 1-67 (MSSQPNHQTS…GAAKKQDHNA (67 aa)) is disordered. The segment covering 27–37 (IVEKESAEKDT) has biased composition (basic and acidic residues). Positions 60 to 115 (AKKQDHNAKERLRRMRLHASYLTLGTLLPDHSSSSSKKKWSAPSIIDNVITYIPKL) constitute a bHLH domain.

The protein belongs to the bHLH protein family.

It is found in the nucleus. The chain is Transcription factor bHLH160 from Arabidopsis thaliana (Mouse-ear cress).